A 173-amino-acid polypeptide reads, in one-letter code: Thiol-disulfide oxidoreductase ResA (173 aa).

The chain crosses the membrane as a helical; Signal-anchor for type II membrane protein span at residues 10–29 (VIILLILCGAVGFTLYQGYF). Positions 35 to 173 (MEIGKEAPNF…LEEYLKKITP (139 aa)) constitute a Thioredoxin domain. Cysteines 73 and 76 form a disulfide.

Belongs to the thioredoxin family. ResA subfamily.

The protein localises to the cell membrane. Its pathway is protein modification; cytochrome c assembly. Functionally, thiol-disulfide oxidoreductase which is required in disulfide reduction during c-type cytochrome synthesis. May accept reducing equivalents from CcdA, leading to breakage of disulfide bonds in apocytochrome c; following this reduction heme can be covalently attached. The protein is Thiol-disulfide oxidoreductase ResA of Bacillus thuringiensis subsp. konkukian (strain 97-27).